The sequence spans 482 residues: Anaerobic nitric oxide reductase flavorubredoxin (482 aa).

The tract at residues 30 to 210 (LRGSSYNSYL…PFSRLVTPKI (181 aa)) is zinc metallo-hydrolase. Fe cation-binding residues include His-79, Glu-81, Asp-83, His-147, Asp-166, and His-227. One can recognise a Flavodoxin-like domain in the interval 254-393 (ITLFYDTMSN…ICRQHGREIA (140 aa)). Residues 260-264 (TMSNN) and 342-369 (AFGS…EMSM) each bind FMN. The 52-residue stretch at 426–477 (GPCMQCSVCQWVYDPALGEPLQDVAPGTPWSDVPDNFLCPECSLGKDVFDVL) folds into the Rubredoxin-like domain. 4 residues coordinate Fe cation: Cys-431, Cys-434, Cys-464, and Cys-467.

This sequence in the N-terminal section; belongs to the zinc metallo-hydrolase group 3 family. In terms of assembly, homotetramer. Fe cation is required as a cofactor. FMN serves as cofactor.

It is found in the cytoplasm. It functions in the pathway nitrogen metabolism; nitric oxide reduction. Its function is as follows. Anaerobic nitric oxide reductase; uses NADH to detoxify nitric oxide (NO), protecting several 4Fe-4S NO-sensitive enzymes. Has at least 2 reductase partners, only one of which (NorW, flavorubredoxin reductase) has been identified. NO probably binds to the di-iron center; electrons enter from the NorW at rubredoxin and are transferred sequentially to the FMN center and the di-iron center. Also able to function as an aerobic oxygen reductase. The protein is Anaerobic nitric oxide reductase flavorubredoxin of Enterobacter sp. (strain 638).